The chain runs to 278 residues: Large ribosomal subunit protein uL2 (278 aa).

Disordered regions lie at residues 29–53 and 221–278; these read PVKSLTEGKRKTGGRNNKGHVTSRG and RGVA…KKKR. Residues 269 to 278 show a composition bias toward basic residues; that stretch reads IRSRHAKKKR.

This sequence belongs to the universal ribosomal protein uL2 family. Part of the 50S ribosomal subunit. Forms a bridge to the 30S subunit in the 70S ribosome.

One of the primary rRNA binding proteins. Required for association of the 30S and 50S subunits to form the 70S ribosome, for tRNA binding and peptide bond formation. It has been suggested to have peptidyltransferase activity; this is somewhat controversial. Makes several contacts with the 16S rRNA in the 70S ribosome. The protein is Large ribosomal subunit protein uL2 of Erythrobacter litoralis (strain HTCC2594).